A 78-amino-acid chain; its full sequence is uncharacterized protein (78 aa).

Helical transmembrane passes span Leu-5–Met-24 and Leu-39–Ile-61.

It localises to the cell membrane. This is an uncharacterized protein from Bacillus subtilis (strain 168).